The sequence spans 258 residues: UPF0246 protein VS_0505 (258 aa).

This sequence belongs to the UPF0246 family.

The polypeptide is UPF0246 protein VS_0505 (Vibrio atlanticus (strain LGP32) (Vibrio splendidus (strain Mel32))).